Here is a 202-residue protein sequence, read N- to C-terminus: Putative pituitary tumor-transforming gene 3 protein (202 aa).

A D-box motif is present at residues 61–64; it reads RKAL. Positions 67 to 92 are disordered; sequence VNRATEKSVKTNGPLKQKQPSFSAKK. The short motif at 163 to 173 is the SH3-binding element; sequence PPLPLKMPSPP.

It belongs to the securin family.

The protein localises to the cytoplasm. Its subcellular location is the nucleus. This chain is Putative pituitary tumor-transforming gene 3 protein (PTTG3), found in Pongo pygmaeus (Bornean orangutan).